The primary structure comprises 32 residues: U6-ctenitoxin-Pr1a (32 aa).

Disulfide bonds link cysteine 3-cysteine 17, cysteine 10-cysteine 21, and cysteine 16-cysteine 30.

In terms of tissue distribution, expressed by the venom gland.

The protein resides in the secreted. The sequence is that of U6-ctenitoxin-Pr1a from Phoneutria reidyi (Brazilian Amazonian armed spider).